The chain runs to 328 residues: GMP reductase (328 aa).

C176 acts as the Thioimidate intermediate in catalysis. 205 to 228 contacts NADP(+); sequence IIADGGIRTHGDIAKSIRFGASMI.

It belongs to the IMPDH/GMPR family. GuaC type 2 subfamily.

The catalysed reaction is IMP + NH4(+) + NADP(+) = GMP + NADPH + 2 H(+). Catalyzes the irreversible NADPH-dependent deamination of GMP to IMP. It functions in the conversion of nucleobase, nucleoside and nucleotide derivatives of G to A nucleotides, and in maintaining the intracellular balance of A and G nucleotides. The sequence is that of GMP reductase from Streptococcus pneumoniae serotype 19F (strain G54).